The chain runs to 444 residues: Cell division cycle 20.4, cofactor of APC complex (444 aa).

The segment covering 88–99 (LLSTNHSDSPHQ) has biased composition (polar residues). Positions 88–108 (LLSTNHSDSPHQNPKPVKPRR) are disordered. 7 WD repeats span residues 124–161 (RDDFSLNLLDWGSANVLAIALGDTVYLWDASSGSTSEL), 166–205 (EDKGPVTSINWTQDGLDLAVGLDNSEVQLWDCVSNRQVRT), 209–246 (GHESRVGSLAWDNHILTTGGMDGKIVNNDVRIRSSIVE), 250–289 (GHTEEVCGLKWSESGNKQASGGNDNVVHIWDRSLASSKQT), 298–340 (EHTA…CLNS), 342–383 (ETGS…KMAE), and 386–425 (GHTSRVLFMAQSPNGCTVASAAGDENLRLWNVFGEPPKTT).

It belongs to the WD repeat CDC20/Fizzy family. As to quaternary structure, the APC/C is composed of at least 11 subunits that stay tightly associated throughout the cell cycle.

Its subcellular location is the cytoplasm. It functions in the pathway protein modification; protein ubiquitination. Its function is as follows. Component of the anaphase promoting complex/cyclosome (APC/C), a cell cycle-regulated E3 ubiquitin-protein ligase complex that controls progression through mitosis and the G1 phase of the cell cycle. The sequence is that of Cell division cycle 20.4, cofactor of APC complex (CDC20-4) from Arabidopsis thaliana (Mouse-ear cress).